The primary structure comprises 592 residues: Neurogenic locus notch homolog protein (592 aa).

Positions 1 to 19 (MIFVLTLVALCTAIHCPDG) are cleaved as a signal peptide. EGF-like domains are found at residues 64-104 (YPSI…DYQV), 106-146 (VPEA…EKCT), 267-307 (YPEA…NTCI), 353-387 (NSQT…PTCE), 453-488 (VPNS…ALCE), and 546-588 (IDGE…KHCN). Intrachain disulfides connect Cys68–Cys82, Cys76–Cys92, Cys110–Cys123, Cys117–Cys134, Cys136–Cys145, Cys271–Cys284, Cys278–Cys293, Cys295–Cys306, Cys362–Cys375, Cys377–Cys386, Cys457–Cys471, Cys478–Cys487, Cys550–Cys565, Cys555–Cys576, and Cys578–Cys587. N-linked (GlcNAc...) asparagine glycosylation is present at Asn552.

The protein belongs to the NOTCH family. Interacts with EB1.

The protein resides in the cell projection. It is found in the cilium. It localises to the flagellum. Its subcellular location is the cytoplasm. The protein localises to the cytoskeleton. The protein resides in the flagellum axoneme. This chain is Neurogenic locus notch homolog protein, found in Giardia intestinalis (strain ATCC 50803 / WB clone C6) (Giardia lamblia).